Consider the following 975-residue polypeptide: MAAEAAGGKYRSTVSKSKDPSGLLISVIRTLSTSDDVEDRENEKGRLEEAYEKCDRDLDELIVQHYTELTTAIRTYQSITERITNSRNKIKQVKENLLSCKMLLHCKRDELRKLWIEGIEHKHVLNLLDEIENIKQVPQKLEQCMASKHYLSATDMLVSAVESLEGPLLQVEGLSDLRLELHSKKMNLHLVLIEELHRHLYIKSTSRVVQRNKEKGKMSSHGKDPSPGPLIDVSNIPTPRKFLDASQYSAAGGSSVREMNLQDVKEDLECDPEENSTLFMGILIQGLARLKKIPETVKAIKERLEQELKQIVKRSTTQVADSAYQRGESLTVDNQPRLLLELLELLFDKFNAVATAHSVVLGYLQDSVGTQLTQQEEIKLYDMADVWVKIQDVLQMLLTEYLDMKNTRTASEPSAQLSYASTGREFAAFFAKKKPQRPKNSLFKFESSSHAISMSAYLREQRRELYSRSGELQGGPDDNLIEGGGTKFVCKPGARNITVIFHPLLRFIQEIEHALGLGPAKQCPLREFLTVYIKSIFLNQVLAEINKEIEGVTKTSDPLKILANADTMKVLGVQRPLLQSTIIVEKTVQDLMNLMHDLSAYSDQFLNMVCVKLQEYKDTCSTAYRGIVQSEEKLVISASWAKDDDISRLLKSLPNWTNMAQPKQLRPKREEEEDFIRAAFGKESEVLIGNLGDKLIPPQDILRDVSDLKALANMHESLEWLAGRTKSAFSNLSTSQMLSPAQESHVNMDLPPVSEQIMQTLSELAKTFQDMADRCLLVLHLEVRVHCFHYLIPLAKEGNYAIVANVESMDYDPLVVKLNKDISAMEEAMSASLQQHKFQYIFEGLGHLISCILINGAQYFRRISESGIKKMCRNIFVLQQNLTNITMSREADLDFARQYYEMLYNTADELLNLVVDQGVKYTELEYIHALTLLHRSQTGVGDQTTQNTRLQRLKEIICEQAAIKQATKDKKITTV.

Ala2 is subject to N-acetylalanine. At Lys9 the chain carries N6-acetyllysine. Ser32 carries the post-translational modification Phosphoserine. The stretch at 32–114 forms a coiled coil; the sequence is STSDDVEDRE…HCKRDELRKL (83 aa). The span at 211–224 shows a compositional bias: basic and acidic residues; the sequence is RNKEKGKMSSHGKD. The interval 211–230 is disordered; the sequence is RNKEKGKMSSHGKDPSPGPL. Ser226 carries the phosphoserine modification. At Thr238 the chain carries Phosphothreonine. Ser469 carries the post-translational modification Phosphoserine.

The protein belongs to the SEC8 family. As to quaternary structure, the exocyst complex is composed of EXOC1, EXOC2, EXOC3, EXOC4, EXOC5, EXOC6, EXOC7 and EXOC8. Interacts with BIRC6/bruce. Interacts with MYRIP. Interacts with SH3BP1; required for the localization of both SH3BP1 and the exocyst to the leading edge of migrating cells. Interacts with SLC6A9. Expressed in the striatum (at protein level).

It localises to the midbody. The protein resides in the midbody ring. The protein localises to the cell projection. Its subcellular location is the cytoplasm. It is found in the cytoskeleton. It localises to the microtubule organizing center. The protein resides in the centrosome. Functionally, component of the exocyst complex involved in the docking of exocytic vesicles with fusion sites on the plasma membrane. This Mus musculus (Mouse) protein is Exocyst complex component 4 (Exoc4).